The primary structure comprises 346 residues: DNA primase small subunit PriS (346 aa).

Residues Asp97, Asp99, and Asp278 contribute to the active site.

It belongs to the eukaryotic-type primase small subunit family. Heterodimer of a small subunit (PriS) and a large subunit (PriL). It depends on Mg(2+) as a cofactor. The cofactor is Mn(2+).

Its function is as follows. Catalytic subunit of DNA primase, an RNA polymerase that catalyzes the synthesis of short RNA molecules used as primers for DNA polymerase during DNA replication. The small subunit contains the primase catalytic core and has DNA synthesis activity on its own. Binding to the large subunit stabilizes and modulates the activity, increasing the rate of DNA synthesis while decreasing the length of the DNA fragments, and conferring RNA synthesis capability. The DNA polymerase activity may enable DNA primase to also catalyze primer extension after primer synthesis. May also play a role in DNA repair. The sequence is that of DNA primase small subunit PriS from Thermococcus onnurineus (strain NA1).